A 108-amino-acid polypeptide reads, in one-letter code: Thiosulfate sulfurtransferase GlpE (108 aa).

The region spanning 17-105 is the Rhodanese domain; sequence QEKEAVLVDI…WQRQFPAEVA (89 aa). Cysteine 65 (cysteine persulfide intermediate) is an active-site residue.

It belongs to the GlpE family.

It localises to the cytoplasm. It carries out the reaction thiosulfate + hydrogen cyanide = thiocyanate + sulfite + 2 H(+). The enzyme catalyses thiosulfate + [thioredoxin]-dithiol = [thioredoxin]-disulfide + hydrogen sulfide + sulfite + 2 H(+). Its function is as follows. Transferase that catalyzes the transfer of sulfur from thiosulfate to thiophilic acceptors such as cyanide or dithiols. May function in a CysM-independent thiosulfate assimilation pathway by catalyzing the conversion of thiosulfate to sulfite, which can then be used for L-cysteine biosynthesis. The sequence is that of Thiosulfate sulfurtransferase GlpE from Escherichia coli O157:H7.